Here is a 143-residue protein sequence, read N- to C-terminus: Putative cytokinin riboside 5'-monophosphate phosphoribohydrolase LOG9 (143 aa).

Residues 23 to 24 (RK), 41 to 47 (RYETMEE), and T53 contribute to the substrate site.

It belongs to the LOG family.

The enzyme catalyses N(6)-(dimethylallyl)adenosine 5'-phosphate + H2O = N(6)-dimethylallyladenine + D-ribose 5-phosphate. The catalysed reaction is 9-ribosyl-trans-zeatin 5'-phosphate + H2O = trans-zeatin + D-ribose 5-phosphate. Functionally, cytokinin-activating enzyme working in the direct activation pathway. Phosphoribohydrolase that converts inactive cytokinin nucleotides to the biologically active free-base forms. This is Putative cytokinin riboside 5'-monophosphate phosphoribohydrolase LOG9 (LOG9) from Arabidopsis thaliana (Mouse-ear cress).